A 55-amino-acid chain; its full sequence is Large ribosomal subunit protein bL33 (55 aa).

The protein belongs to the bacterial ribosomal protein bL33 family.

The chain is Large ribosomal subunit protein bL33 from Methylocella silvestris (strain DSM 15510 / CIP 108128 / LMG 27833 / NCIMB 13906 / BL2).